A 527-amino-acid chain; its full sequence is Methane monooxygenase component A alpha chain (527 aa).

Positions 114, 144, and 147 each coordinate Fe cation. Cys-151 is an active-site residue. Positions 209, 243, and 246 each coordinate Fe cation.

It belongs to the TmoA/XamoA family. As to quaternary structure, m.capsulatus has two forms of methane monooxygenase, a soluble and a membrane-bound type. The soluble type consists of four components (A to D): protein A, comprising three chains, in an alpha-2, beta-2, gamma-2 configuration, is a nonheme iron protein containing an unusual mu-hydroxo bridge structure at its active site and interacts with both oxygen and methane. It depends on Fe cation as a cofactor.

The enzyme catalyses methane + NADH + O2 + H(+) = methanol + NAD(+) + H2O. It catalyses the reaction methane + NADPH + O2 + H(+) = methanol + NADP(+) + H2O. Responsible for the initial oxygenation of methane to methanol in methanotrophs. It also catalyzes the monohydroxylation of a variety of unactivated alkenes, alicyclic, aromatic and heterocyclic compounds. In Methylococcus capsulatus (strain ATCC 33009 / NCIMB 11132 / Bath), this protein is Methane monooxygenase component A alpha chain (mmoX).